Consider the following 775-residue polypeptide: Protein STRUBBELIG-RECEPTOR FAMILY 1 (775 aa).

A signal peptide spans 1–31 (MRSMRSGRDNNICFLGFLSFALISLPSLSLA). Over 32 to 314 (LTNPDDVAAI…GKEDSFTSKR (283 aa)) the chain is Extracellular. LRR repeat units follow at residues 101-122 (SLKAMDFSNNHIGGSIPSTLPV), 123-146 (SLQNLFLSGNNFTGTIPESLSSLK), 147-169 (SLSVMSLNNNLLSGKIPDVFQDL), 171-193 (LMINIDLSSNNLSGPLPPSMQNL), 195-217 (TLTSLLLQNNHLSGELDVLQDLP), and 218-238 (LKDLNVENNLFNGPIPEKLLS). A glycan (N-linked (GlcNAc...) asparagine) is linked at Asn-133. Asn-181 and Asn-192 each carry an N-linked (GlcNAc...) asparagine glycan. An N-linked (GlcNAc...) asparagine glycan is attached at Asn-250. The tract at residues 254–308 (APSPSPETPPSPTSPKRPFFGPPSPNASAGHGQAHVRSPPSDHHPSRPTPQGKED) is disordered. Residues 256–278 (SPSPETPPSPTSPKRPFFGPPSP) are compositionally biased toward pro residues. Asn-279 is a glycosylation site (N-linked (GlcNAc...) asparagine). Residues 315 to 335 (IIWISILGAFSFVVLALVCLL) traverse the membrane as a helical segment. The Cytoplasmic segment spans residues 336–775 (CGRKCLRKRE…NGDNQYTGRR (440 aa)). The interval 345 to 414 (EDSEQLSKPH…VGSESKQESH (70 aa)) is disordered. Positions 367–379 (RSNASMLPPSNTF) are enriched in polar residues. The span at 380–391 (NKDKEARPKERV) shows a compositional bias: basic and acidic residues. A Protein kinase domain is found at 478–756 (FSHENLIGTG…EVVQDLSDMI (279 aa)).

It belongs to the protein kinase superfamily. Ser/Thr protein kinase family. Expressed in roots, stems, leaves and flowers. Low expression in seedlings and siliques.

The protein localises to the membrane. Not essential for epidermal patterning and not redundant with STRUBBELIG. The polypeptide is Protein STRUBBELIG-RECEPTOR FAMILY 1 (SRF1) (Arabidopsis thaliana (Mouse-ear cress)).